Consider the following 292-residue polypeptide: Elongation factor Ts (292 aa).

The tract at residues 80-83 is involved in Mg(2+) ion dislocation from EF-Tu; that stretch reads TDSV.

This sequence belongs to the EF-Ts family.

The protein localises to the cytoplasm. Functionally, associates with the EF-Tu.GDP complex and induces the exchange of GDP to GTP. It remains bound to the aminoacyl-tRNA.EF-Tu.GTP complex up to the GTP hydrolysis stage on the ribosome. This is Elongation factor Ts from Lactiplantibacillus plantarum (strain ATCC BAA-793 / NCIMB 8826 / WCFS1) (Lactobacillus plantarum).